The primary structure comprises 192 residues: Adenylate kinase (192 aa).

10–18 (GVPGVGSTT) provides a ligand contact to ATP.

This sequence belongs to the archaeal adenylate kinase family. Monomer.

The protein resides in the cytoplasm. The catalysed reaction is AMP + ATP = 2 ADP. The protein is Adenylate kinase (adkA) of Methanocaldococcus jannaschii (strain ATCC 43067 / DSM 2661 / JAL-1 / JCM 10045 / NBRC 100440) (Methanococcus jannaschii).